A 282-amino-acid polypeptide reads, in one-letter code: Nucleotide-binding protein XCV3122 (282 aa).

5–12 (GLSGSGKS) contributes to the ATP binding site. Residue 57-60 (DVRS) coordinates GTP.

It belongs to the RapZ-like family.

Functionally, displays ATPase and GTPase activities. The polypeptide is Nucleotide-binding protein XCV3122 (Xanthomonas euvesicatoria pv. vesicatoria (strain 85-10) (Xanthomonas campestris pv. vesicatoria)).